The chain runs to 343 residues: Protease HtpX homolog (343 aa).

The next 2 membrane-spanning stretches (helical) occupy residues 7–24 (TMLL…GYLV) and 29–46 (GMVV…FSYW). Residue His130 participates in Zn(2+) binding. Residue Glu131 is part of the active site. His134 contacts Zn(2+). 2 helical membrane-spanning segments follow: residues 145–165 (LTAT…LMGM) and 177–197 (GAGM…AMLV). Residue Glu206 participates in Zn(2+) binding. The tract at residues 308–343 (NLEDEDLNPEAQNGFTHNQKKKTVRRGKDRPTWLRH) is disordered. The segment covering 325 to 335 (NQKKKTVRRGK) has biased composition (basic residues).

The protein belongs to the peptidase M48B family. Zn(2+) serves as cofactor.

The protein resides in the cell inner membrane. The sequence is that of Protease HtpX homolog from Bartonella bacilliformis (strain ATCC 35685 / KC583 / Herrer 020/F12,63).